Here is a 203-residue protein sequence, read N- to C-terminus: MQAAVASKTNISLKGSTEIVTEFFSYSINTILFQRGLYPPESFTRVAKYGLPILVTNDQSLKDYLDNVLKQLSEWLLSGDVQKLVLVITDIVTKEVLERWVFDVTTDIPKEGEAPRQKPEKEIMNEIQAIIRQITASVTFLPLLPNACTFDLLVYTSKDLAVPQKWEESDPKFITNSQQVKLRSFTTTIHKVESMVAYKISND.

One can recognise an HORMA domain in the interval lysine 14–valine 196. Positions serine 194 to aspartate 203 are required for assuming the closed conformation and for interaction with cdc20.

This sequence belongs to the MAD2 family. As to quaternary structure, interacts with cdc20.

The protein resides in the nucleus. The protein localises to the chromosome. Its subcellular location is the centromere. It localises to the kinetochore. It is found in the cytoplasm. Its function is as follows. Component of the spindle-assembly checkpoint that prevents the onset of anaphase until all chromosomes are properly aligned at the metaphase plate. Required for the execution of the mitotic checkpoint which monitors the process of kinetochore-spindle attachment and inhibits the activity of the anaphase promoting complex until all chromosomes are aligned at the metaphase plate. This is Mitotic spindle assembly checkpoint protein MAD2A (mad2l1-1) from Dictyostelium discoideum (Social amoeba).